A 136-amino-acid polypeptide reads, in one-letter code: Protein NrdI (136 aa).

It belongs to the NrdI family.

Probably involved in ribonucleotide reductase function. The sequence is that of Protein NrdI from Salmonella dublin (strain CT_02021853).